The following is a 518-amino-acid chain: Pre-glycoprotein polyprotein GP complex (518 aa).

Gly-2 carries N-myristoyl glycine; by host lipidation. Over 2–17 (GQVIGFFQSLPNIINE) the chain is Extracellular. A helical membrane pass occupies residues 18-33 (ALNIALICVALIAILK). At 34–58 (GIVNIWKSGLIQLFIFLILAGRSCS) the chain is on the cytoplasmic side. Cys-57 is a Zn(2+) binding site. The Extracellular segment spans residues 59–456 (HTFQIGRNHE…QGSTPLSLVD (398 aa)). Cystine bridges form between Cys-87-Cys-258, Cys-303-Cys-316, Cys-325-Cys-334, and Cys-388-Cys-409. Residues Asn-90, Asn-112, Asn-127, Asn-180, and Asn-251 are each glycosylated (N-linked (GlcNAc...) asparagine; by host). N-linked (GlcNAc...) asparagine; by host glycans are attached at residues Asn-389, Asn-397, Asn-414, and Asn-419. The helical transmembrane segment at 457 to 477 (LCFWSTLFYVTTLFAHLVGFP) threads the bilayer. Residues 478–518 (THRHILDGPCPKPHRLTKKGICSCGHFGIPGKPVRWVKRSR) lie on the Cytoplasmic side of the membrane. The Zn(2+) site is built by His-479, His-481, Cys-487, His-491, Cys-499, and Cys-501.

It belongs to the arenaviridae GPC protein family. As to quaternary structure, interacts with glycoprotein G2. Part of the GP complex (GP-C) together with glycoprotein G1 and glycoprotein G2. The GP-complex interacts with protein Z, which interacts with ribonucleocapsid; these interactions may induce virion budding. In terms of assembly, homotrimer; disulfide-linked. In pre-fusion state, G1 homotrimers bind G2 homotrimers via ionic interactions. Part of the GP complex (GP-C) together with glycoprotein G2 and the stable signal peptide. The GP-complex interacts with protein Z, which interacts with ribonucleocapsid; these interactions may induce virion budding. Homotrimer. Interacts with the stable signal peptide. In pre-fusion state, G2 homotrimers bind G1 homotrimers via ionic interactions. Part of the GP complex (GP-C) together with glycoprotein G1 and the stable signal peptide. Acidification in the endosome triggers rearrangements, which ultimately leads to a 6 helix bundle formed by the two heptad repeat domains (HR1 and HR2) in post-fusion state. The GP-complex interacts with protein Z, which interacts with ribonucleocapsid; these interactions may induce virion budding. Specific enzymatic cleavages in vivo yield mature proteins. GP-C polyprotein is cleaved in the endoplasmic reticulum by the host protease MBTPS1. Only cleaved glycoprotein is incorporated into virions. Post-translationally, the SSP remains stably associated with the GP complex following cleavage by signal peptidase and plays crucial roles in the trafficking of GP through the secretory pathway. In terms of processing, myristoylation is necessary for GP2-mediated fusion activity.

It is found in the virion membrane. It localises to the host endoplasmic reticulum membrane. The protein resides in the host Golgi apparatus membrane. The protein localises to the host cell membrane. Functions as a cleaved signal peptide that is retained as the third component of the GP complex (GP-C). Helps to stabilize the spike complex in its native conformation. The SSP is required for efficient glycoprotein expression, post-translational maturation cleavage of G1 and G2, glycoprotein transport to the cell surface plasma membrane, formation of infectious virus particles, and acid pH-dependent glycoprotein-mediated cell fusion. In terms of biological role, forms the virion spikes together with glycoprotein G2. The glycoprotein spike trimers are connected to the underlying matrix. Mediates virus attachment to host receptor alpha-dystroglycan DAG1. This attachment induces virion internalization predominantly through clathrin- and caveolin-independent endocytosis. Its function is as follows. Forms the virion spikes together with glycoprotein G1. The glycoprotein spike trimers are connected to the underlying matrix. Class I viral fusion protein that directs fusion of viral and host endosomal membranes, leading to delivery of the nucleocapsid into the cytoplasm. Membrane fusion is mediated by irreversible conformational changes induced by acidification. The polypeptide is Pre-glycoprotein polyprotein GP complex (Bolomys (OLVV)).